The following is a 431-amino-acid chain: Serine hydroxymethyltransferase (431 aa).

Residues Leu-128 and 132–134 (GHL) each bind (6S)-5,6,7,8-tetrahydrofolate. Lys-237 is subject to N6-(pyridoxal phosphate)lysine.

Belongs to the SHMT family. As to quaternary structure, homodimer. It depends on pyridoxal 5'-phosphate as a cofactor.

It is found in the cytoplasm. The catalysed reaction is (6R)-5,10-methylene-5,6,7,8-tetrahydrofolate + glycine + H2O = (6S)-5,6,7,8-tetrahydrofolate + L-serine. It participates in one-carbon metabolism; tetrahydrofolate interconversion. The protein operates within amino-acid biosynthesis; glycine biosynthesis; glycine from L-serine: step 1/1. Functionally, catalyzes the reversible interconversion of serine and glycine with tetrahydrofolate (THF) serving as the one-carbon carrier. This reaction serves as the major source of one-carbon groups required for the biosynthesis of purines, thymidylate, methionine, and other important biomolecules. Also exhibits THF-independent aldolase activity toward beta-hydroxyamino acids, producing glycine and aldehydes, via a retro-aldol mechanism. This Ruegeria sp. (strain TM1040) (Silicibacter sp.) protein is Serine hydroxymethyltransferase.